The primary structure comprises 30 residues: Trypsin inhibitor 4 (30 aa).

3 cysteine pairs are disulfide-bonded: cysteine 3–cysteine 20, cysteine 10–cysteine 22, and cysteine 16–cysteine 28.

This sequence belongs to the protease inhibitor I7 (squash-type serine protease inhibitor) family.

The protein resides in the secreted. Functionally, inhibits trypsin; probably participates in a plant defense mechanism. This is Trypsin inhibitor 4 from Momordica charantia (Bitter gourd).